Here is a 71-residue protein sequence, read N- to C-terminus: MSKPTVIVIFMAILVLGMATKETQGANCVNYFEITFPEVCEANWCAAECLKAYKNGKGTCWQKFCQCVYDC.

Positions 1-25 are cleaved as a signal peptide; the sequence is MSKPTVIVIFMAILVLGMATKETQG. 4 disulfide bridges follow: Cys28–Cys71, Cys40–Cys60, Cys45–Cys65, and Cys49–Cys67.

Belongs to the DEFL family.

The protein localises to the secreted. The polypeptide is Defensin-like protein 124 (LCR16) (Arabidopsis thaliana (Mouse-ear cress)).